We begin with the raw amino-acid sequence, 455 residues long: UDP-glycosyltransferase 75B2 (455 aa).

His16 (proton acceptor) is an active-site residue. Residue His16 participates in an anthocyanidin binding. UDP-alpha-D-glucose-binding residues include Gln337, His352, Trp355, Ser357, Glu360, Asp376, and Gln377.

Belongs to the UDP-glycosyltransferase family.

It catalyses the reaction (indol-3-yl)acetate + UDP-alpha-D-glucose = 1-O-(indol-3-ylacetyl)-beta-D-glucose + UDP. Its pathway is plant hormone metabolism; auxin conjugation. Its function is as follows. Possesses low catalytic activity in vitro. Also active as glucosyltransferase in vitro on benzoates and benzoate derivatives. In Arabidopsis thaliana (Mouse-ear cress), this protein is UDP-glycosyltransferase 75B2 (UGT75B2).